Here is a 191-residue protein sequence, read N- to C-terminus: Large ribosomal subunit protein uL5 (191 aa).

Belongs to the universal ribosomal protein uL5 family. Part of the 50S ribosomal subunit; part of the 5S rRNA/L5/L18/L25 subcomplex. Contacts the 5S rRNA and the P site tRNA. Forms a bridge to the 30S subunit in the 70S ribosome.

Functionally, this is one of the proteins that bind and probably mediate the attachment of the 5S RNA into the large ribosomal subunit, where it forms part of the central protuberance. In the 70S ribosome it contacts protein S13 of the 30S subunit (bridge B1b), connecting the 2 subunits; this bridge is implicated in subunit movement. Contacts the P site tRNA; the 5S rRNA and some of its associated proteins might help stabilize positioning of ribosome-bound tRNAs. This Micrococcus luteus (Micrococcus lysodeikticus) protein is Large ribosomal subunit protein uL5.